The primary structure comprises 483 residues: Xylulose kinase (483 aa).

M79–H80 is a substrate binding site.

Belongs to the FGGY kinase family.

The catalysed reaction is D-xylulose + ATP = D-xylulose 5-phosphate + ADP + H(+). Its function is as follows. Catalyzes the phosphorylation of D-xylulose to D-xylulose 5-phosphate. The chain is Xylulose kinase from Staphylococcus xylosus.